Reading from the N-terminus, the 419-residue chain is Probable glycosidase C21B10.07 (419 aa).

Disordered regions lie at residues 1 to 20 (MGIP…AALS) and 29 to 67 (DPAR…NNEN). Positions 30-59 (PARKNESTNDVIDNHTDTEIDDHDNDHENL) are enriched in basic and acidic residues. Residues 88–108 (FIWILIFIVALICSVLIGVLG) traverse the membrane as a helical segment. Positions 122-387 (PSYKAKTYSL…WAGSSVYSSA (266 aa)) constitute a GH16 domain. Glu237 functions as the Nucleophile in the catalytic mechanism. Catalysis depends on Glu242, which acts as the Proton donor.

It belongs to the glycosyl hydrolase 16 family.

Its subcellular location is the membrane. This Schizosaccharomyces pombe (strain 972 / ATCC 24843) (Fission yeast) protein is Probable glycosidase C21B10.07.